The chain runs to 497 residues: Maintenance of mitochondrial morphology protein 1 (497 aa).

Topologically, residues 1-28 (MSSVLNPSSPHSWDLCCSSSSNRSYHRP) are lumenal. Residues 29–55 (THPIVGLLVGQLSVVLLIGAFIKFFIF) form a helical membrane-spanning segment. The Cytoplasmic segment spans residues 56 to 497 (GEAPPSPSRS…GSLPDAVPIT (442 aa)). Disordered stretches follow at residues 60 to 107 (PSPS…SSST), 284 to 330 (ESST…STTG), 402 to 421 (TGVR…AAGV), and 437 to 497 (EMLH…VPIT). The span at 66–77 (QTHRTSQHKRSY) shows a compositional bias: basic residues. The segment covering 81-94 (GARDLSPRTLKEKP) has biased composition (basic and acidic residues). Composition is skewed to polar residues over residues 95-107 (SSNV…SSST), 284-302 (ESST…NLRS), and 311-330 (PQES…STTG). The 254-residue stretch at 140-393 (QPESLDWFNV…EPRVQVVALP (254 aa)) folds into the SMP-LTD domain. The span at 412–421 (DVSSSDAAGV) shows a compositional bias: low complexity. Positions 440-451 (HAAREVDAEGLR) are enriched in basic and acidic residues. Polar residues predominate over residues 462-473 (GSSSKYAQQNQS). Over residues 474-484 (SRERGRADDPF) the composition is skewed to basic and acidic residues.

Belongs to the MMM1 family. As to quaternary structure, homodimer. Component of the ER-mitochondria encounter structure (ERMES) or MDM complex, composed of MMM1, MDM10, MDM12 and MDM34. An MMM1 homodimer associates with one molecule of MDM12 on each side in a pairwise head-to-tail manner, and the SMP-LTD domains of MMM1 and MDM12 generate a continuous hydrophobic tunnel for phospholipid trafficking.

It is found in the endoplasmic reticulum membrane. Its function is as follows. Component of the ERMES/MDM complex, which serves as a molecular tether to connect the endoplasmic reticulum (ER) and mitochondria. Components of this complex are involved in the control of mitochondrial shape and protein biogenesis, and function in nonvesicular lipid trafficking between the ER and mitochondria. The MDM12-MMM1 subcomplex functions in the major beta-barrel assembly pathway that is responsible for biogenesis of all outer membrane beta-barrel proteins, and acts in a late step after the SAM complex. The MDM10-MDM12-MMM1 subcomplex further acts in the TOM40-specific pathway after the action of the MDM12-MMM1 complex. Essential for establishing and maintaining the structure of mitochondria and maintenance of mtDNA nucleoids. This Uncinocarpus reesii (strain UAMH 1704) protein is Maintenance of mitochondrial morphology protein 1.